Reading from the N-terminus, the 843-residue chain is DNA-directed RNA polymerase subunit beta' (843 aa).

Cys-70, Cys-72, Cys-85, and Cys-88 together coordinate Zn(2+). Residues Asp-686, Asp-688, and Asp-690 each coordinate Mg(2+).

Belongs to the RNA polymerase beta' chain family. RpoC1 subfamily. In terms of assembly, in plastids the minimal PEP RNA polymerase catalytic core is composed of four subunits: alpha, beta, beta', and beta''. When a (nuclear-encoded) sigma factor is associated with the core the holoenzyme is formed, which can initiate transcription. Mg(2+) serves as cofactor. Requires Zn(2+) as cofactor.

The protein localises to the plastid. It localises to the chloroplast. It catalyses the reaction RNA(n) + a ribonucleoside 5'-triphosphate = RNA(n+1) + diphosphate. Functionally, DNA-dependent RNA polymerase catalyzes the transcription of DNA into RNA using the four ribonucleoside triphosphates as substrates. This is DNA-directed RNA polymerase subunit beta' from Trieres chinensis (Marine centric diatom).